Reading from the N-terminus, the 159-residue chain is Transcription elongation factor GreA (159 aa).

Positions 1–76 (MAEEKEVVLT…SLEKTLKKAR (76 aa)) form a coiled coil.

Belongs to the GreA/GreB family.

Functionally, necessary for efficient RNA polymerase transcription elongation past template-encoded arresting sites. The arresting sites in DNA have the property of trapping a certain fraction of elongating RNA polymerases that pass through, resulting in locked ternary complexes. Cleavage of the nascent transcript by cleavage factors such as GreA or GreB allows the resumption of elongation from the new 3'terminus. GreA releases sequences of 2 to 3 nucleotides. The sequence is that of Transcription elongation factor GreA from Syntrophomonas wolfei subsp. wolfei (strain DSM 2245B / Goettingen).